The primary structure comprises 173 residues: Nuclear transcription factor Y subunit B-8 (173 aa).

Residues 1-30 (MAESQAKSPGGCGSHESGGDQSPRSLHVRE) are disordered. Position 2 is an N-acetylalanine (Ala-2). The DNA-binding element occupies 35–41 (LPIANIS). Residues 62–73 (VQECVSEFISFV) form a subunit association domain (SAD) region. Residues 123-173 (DTKGSAKGGDPNAKKDGQSSQNGQFSQLAHQGPYGNSQAQQHMMVPMPGTD) are disordered. Over residues 140 to 163 (QSSQNGQFSQLAHQGPYGNSQAQQ) the composition is skewed to polar residues.

Belongs to the NFYB/HAP3 subunit family. As to quaternary structure, heterotrimeric transcription factor composed of three components, NF-YA, NF-YB and NF-YC. NF-YB and NF-YC must interact and dimerize for NF-YA association and DNA binding. Expressed in flowers and mature rosettes.

The protein localises to the nucleus. In terms of biological role, component of the NF-Y/HAP transcription factor complex. The NF-Y complex stimulates the transcription of various genes by recognizing and binding to a CCAAT motif in promoters. The polypeptide is Nuclear transcription factor Y subunit B-8 (NFYB8) (Arabidopsis thaliana (Mouse-ear cress)).